Here is a 352-residue protein sequence, read N- to C-terminus: Leukotriene B4 receptor 1 (352 aa).

Topologically, residues methionine 1–leucine 19 are extracellular. Asparagine 2 carries N-linked (GlcNAc...) asparagine glycosylation. The chain crosses the membrane as a helical span at residues leucine 20 to serine 42. The Cytoplasmic segment spans residues isoleucine 43 to alanine 54. The chain crosses the membrane as a helical span at residues leucine 55–leucine 75. Residues histidine 76–arginine 91 lie on the Extracellular side of the membrane. A helical transmembrane segment spans residues leucine 92–leucine 113. Over aspartate 114–leucine 138 the chain is Cytoplasmic. The helical transmembrane segment at alanine 139–valine 159 threads the bilayer. Over proline 160 to arginine 178 the chain is Extracellular. N-linked (GlcNAc...) asparagine glycosylation is present at asparagine 164. A helical membrane pass occupies residues alanine 179–alanine 199. The Cytoplasmic portion of the chain corresponds to serine 200–arginine 221. The helical transmembrane segment at leucine 222–leucine 242 threads the bilayer. Residues alanine 243–asparagine 268 lie on the Extracellular side of the membrane. Residues valine 269–glycine 289 form a helical membrane-spanning segment. Residues glycine 290–asparagine 352 lie on the Cytoplasmic side of the membrane. Composition is skewed to polar residues over residues serine 310–arginine 326 and glutamate 338–asparagine 352. A disordered region spans residues serine 310–asparagine 352.

The protein belongs to the G-protein coupled receptor 1 family. Phosphorylated by GRK6 upon leukotriene B4 binding; which promotes desensitization. As to expression, expressed at highest levels in heart, skeletal muscle and at lower levels in brain and liver. High level of expression in lymphoid tissues.

The protein resides in the cell membrane. In terms of biological role, receptor for extracellular ATP &gt; UTP and ADP. The activity of this receptor is mediated by G proteins which activate a phosphatidylinositol-calcium second messenger system. May be the cardiac P2Y receptor involved in the regulation of cardiac muscle contraction through modulation of L-type calcium currents. Is a receptor for leukotriene B4, a potent chemoattractant involved in inflammation and immune response. The polypeptide is Leukotriene B4 receptor 1 (LTB4R) (Homo sapiens (Human)).